Consider the following 63-residue polypeptide: Ct-IT2 (63 aa).

Residues 1-63 (KDGYPMDSKG…VWDKATNKCG (63 aa)) enclose the LCN-type CS-alpha/beta domain. Intrachain disulfides connect Cys-11–Cys-62, Cys-15–Cys-36, Cys-22–Cys-43, and Cys-26–Cys-45. A Glycine amide modification is found at Gly-63.

Expressed by the venom gland.

The protein localises to the secreted. Functionally, beta toxins bind voltage-independently at site-4 of sodium channels (Nav) and shift the voltage of activation toward more negative potentials thereby affecting sodium channel activation and promoting spontaneous and repetitive firing. Is highly active on insects, since it provokes paralysis and death when injected into crickets. The polypeptide is Ct-IT2 (Centruroides tecomanus (Scorpion)).